Here is a 548-residue protein sequence, read N- to C-terminus: ETS domain-containing transcription factor ERF (548 aa).

Phosphothreonine is present on residues threonine 3 and threonine 7. Residues serine 20 and serine 24 each carry the phosphoserine modification. Residues 27–107 (IQLWHFILEL…KGKRFTYKFN (81 aa)) constitute a DNA-binding region (ETS). Disordered stretches follow at residues 130 to 169 (QSAP…SSSS), 184 to 225 (GSVS…LARL), and 280 to 304 (SPTL…SHFS). 2 positions are modified to phosphoserine: serine 185 and serine 190. Positions 289–301 (SGGGGPSGSGGGS) are enriched in gly residues. A Phosphoserine modification is found at serine 327. Residues 342 to 478 (PQRPDKCPLP…GEAPGASQCM (137 aa)) are disordered. Residues 348-361 (CPLPPMAPETPPVP) are compositionally biased toward pro residues. Low complexity-rich tracts occupy residues 362–373 (SSASSSSSSSSS) and 394–403 (KAVAGADKSG). Serine 431 and serine 435 each carry phosphoserine. Acidic residues predominate over residues 431–451 (SEGESEEVEVTDISDEDEEDG). A Phosphothreonine modification is found at threonine 441. The residue at position 444 (serine 444) is a Phosphoserine. Glycyl lysine isopeptide (Lys-Gly) (interchain with G-Cter in SUMO2) cross-links involve residues lysine 465, lysine 481, and lysine 512. The segment at 492–548 (CRLEGGGGPAGGFEDEGEDKKVRGEGPGEAGGPLTPRRVSSDLQHATAQLSLEHRDS) is disordered. Threonine 526 is modified (phosphothreonine; by MAPK1). A phosphoserine mark is found at serine 531, serine 532, and serine 548. Residues 532 to 541 (SDLQHATAQL) are compositionally biased toward polar residues.

It belongs to the ETS family. Phosphorylated by multiple kinases including MAPK1/ERK2 at THR-526. Phosphorylation regulates the activity of ERF. Highest levels in testis, ovary, pancreas, and heart.

It is found in the nucleus. Potent transcriptional repressor that binds to the H1 element of the Ets2 promoter. May regulate other genes involved in cellular proliferation. Required for extraembryonic ectoderm differentiation, ectoplacental cone cavity closure, and chorioallantoic attachment. May be important for regulating trophoblast stem cell differentiation. The sequence is that of ETS domain-containing transcription factor ERF (ERF) from Homo sapiens (Human).